The sequence spans 184 residues: ATP synthase subunit b, chloroplastic (184 aa).

Residues 29 to 49 (TNLINLGVVLGLLVYFGKGVL) traverse the membrane as a helical segment.

It belongs to the ATPase B chain family. In terms of assembly, F-type ATPases have 2 components, F(1) - the catalytic core - and F(0) - the membrane proton channel. F(1) has five subunits: alpha(3), beta(3), gamma(1), delta(1), epsilon(1). F(0) has four main subunits: a(1), b(1), b'(1) and c(10-14). The alpha and beta chains form an alternating ring which encloses part of the gamma chain. F(1) is attached to F(0) by a central stalk formed by the gamma and epsilon chains, while a peripheral stalk is formed by the delta, b and b' chains.

It localises to the plastid. It is found in the chloroplast thylakoid membrane. Its function is as follows. F(1)F(0) ATP synthase produces ATP from ADP in the presence of a proton or sodium gradient. F-type ATPases consist of two structural domains, F(1) containing the extramembraneous catalytic core and F(0) containing the membrane proton channel, linked together by a central stalk and a peripheral stalk. During catalysis, ATP synthesis in the catalytic domain of F(1) is coupled via a rotary mechanism of the central stalk subunits to proton translocation. In terms of biological role, component of the F(0) channel, it forms part of the peripheral stalk, linking F(1) to F(0). The polypeptide is ATP synthase subunit b, chloroplastic (Anthoceros angustus (Hornwort)).